The chain runs to 444 residues: Cortexillin-1 (444 aa).

The tract at residues 1-227 (MAGKDWEIVQ…VLYTSLFFHA (227 aa)) is actin-binding. Calponin-homology (CH) domains are found at residues 8–115 (IVQE…RKYR) and 124–229 (KSSE…HAYR). Coiled-coil stretches lie at residues 227–352 (AYRA…TRIR) and 410–434 (LATK…DLKA).

This sequence belongs to the cortexillin family. Homodimer; parallel.

Its subcellular location is the cytoplasm. It is found in the cytoskeleton. In terms of biological role, actin-bundling protein. When linked to F-actin the actin filaments form preferentially anti-parallel bundles that associate into meshworks. Plays a major role in cytokinesis. Negatively regulates cortical localization of rapgap1. This chain is Cortexillin-1 (ctxA), found in Dictyostelium discoideum (Social amoeba).